The primary structure comprises 318 residues: MERIFCVPYSLYPGYGNMLRLGQSGLSEPRQPHWRQTNVPPTFLARPRLLMPSNASDCCVDPYKRAQLMAVFSHMNPGLSLRLRKANTKDVGVQVSLRVGKSVQCSLGPRTLDSLSPWASAGHRAPASAWGVSSSVPGHWGEVRLREELSDPPEAGQPPPPLPPPSPPPRSEEDPPEELQPREELVEEDSSSPRERKSKPAPVDSSQPLGRPNFQFLEPKYGYFHCKDCKTRWESAYVWCISGTNKVYFKQLCCKCQKSFNPYRVEAIQCQTCSKSRCSCPQKKRHINLRRPHRQELCGRCKDKRFSCGSIYSFKYIM.

The disordered stretch occupies residues L149–R211. Pro residues predominate over residues A155–P169. The 3CxxC-type zinc-finger motif lies at P219 to K304.

This sequence belongs to the ZAR1 family. In terms of assembly, interacts with YBX2.

Its subcellular location is the cytoplasm. The protein localises to the cytoplasmic ribonucleoprotein granule. Its function is as follows. mRNA-binding protein required for maternal mRNA storage, translation and degradation during oocyte maturation. Probably promotes formation of some phase-separated membraneless compartment that stores maternal mRNAs in oocytes: acts by undergoing liquid-liquid phase separation upon binding to maternal mRNAs. Binds to the 3'-UTR of maternal mRNAs, inhibiting their translation. This Bos taurus (Bovine) protein is ZAR1-like protein (ZAR1L).